Consider the following 336-residue polypeptide: Protein-arginine N-acetylglucosaminyltransferase SseK1 (336 aa).

Residue R24 is glycosylated (N-beta-linked (GlcNAc) arginine; by autocatalysis). Residues 50–52 and Y74 contribute to the UDP-N-acetyl-alpha-D-glucosamine site; that span reads QWF. A glycan (N-beta-linked (GlcNAc) arginine; by autocatalysis) is linked at R152. The short motif at 223–225 is the DXD motif element; that stretch reads DAD. 224–225 is a binding site for UDP-N-acetyl-alpha-D-glucosamine; that stretch reads AD. D225 provides a ligand contact to Mn(2+). Residue E255 is the Proton acceptor of the active site. Mn(2+) is bound by residues N322 and S324. The UDP-N-acetyl-alpha-D-glucosamine site is built by S324 and S329. R333 carries N-beta-linked (GlcNAc) arginine; by autocatalysis glycosylation.

This sequence belongs to the glycosyltransferase NleB family. It depends on Mn(2+) as a cofactor. Auto-glycosylated: arginine GlcNAcylation is required for activity toward death domain-containing host target proteins.

It localises to the secreted. The protein localises to the host cytoplasm. Its subcellular location is the host cytosol. It catalyses the reaction L-arginyl-[protein] + UDP-N-acetyl-alpha-D-glucosamine = N(omega)-(N-acetyl-beta-D-glucosaminyl)-L-arginyl-[protein] + UDP + H(+). Its activity is regulated as follows. Protein-arginine N-acetylglucosaminyltransferase activity is inhibited by 100066N compound (flavone analog) and 102644N compound (a substituted isoxazole). Its function is as follows. Protein-arginine N-acetylglucosaminyltransferase effector that disrupts TNF signaling in infected cells, including NF-kappa-B signaling, apoptosis and necroptosis. Acts by catalyzing the transfer of a single N-acetylglucosamine (GlcNAc) to a conserved arginine residue in the death domain of host proteins TRADD and, to a lower extent, FADD: arginine GlcNAcylation prevents homotypic/heterotypic death domain interactions and assembly of the oligomeric TNF-alpha receptor complex, thereby disrupting TNF signaling. Also acts on host proteins without a death domain: catalyzes arginine GlcNAcylation of host GAPDH protein, thereby preventing GAPDH interaction with TRAF2, leading to inhibit NF-kappa-B signaling. Catalyzes GlcNAcylation of host tubulin-folding cofactor TBCB, thereby promoting microtubule stability. Also mediates auto-GlcNAcylation, which is required for activity toward death domain-containing host target proteins. In Salmonella enteritidis (strain 2009K0958), this protein is Protein-arginine N-acetylglucosaminyltransferase SseK1.